We begin with the raw amino-acid sequence, 35 residues long: Kappa-theraphotoxin-Tb1c (35 aa).

Disulfide bonds link Cys-3–Cys-18, Cys-10–Cys-23, and Cys-17–Cys-30.

Belongs to the neurotoxin 10 (Hwtx-1) family. 59 (Tltx) subfamily. Monomer. In terms of tissue distribution, expressed by the venom gland.

The protein resides in the secreted. Blocks Kv4.2/KCND2 voltage-gated potassium channels probably by shifting the voltage-dependence of channel activation to more depolarized potentials and by binding to the S3-S4 linker region of the voltage sensor domain. In Theraphosa blondi (Goliath birdeating spider), this protein is Kappa-theraphotoxin-Tb1c.